The sequence spans 544 residues: Thermosome subunit (544 aa).

It belongs to the TCP-1 chaperonin family. In terms of assembly, forms an oligomeric complex of eight-membered rings.

Functionally, molecular chaperone; binds unfolded polypeptides in vitro, and has a weak ATPase activity. The sequence is that of Thermosome subunit (ths) from Methanothermococcus thermolithotrophicus (Methanococcus thermolithotrophicus).